A 322-amino-acid chain; its full sequence is Acetylglutamate kinase (322 aa).

Substrate is bound by residues 89–90 (GG), Arg-111, and Asn-217.

This sequence belongs to the acetylglutamate kinase family. ArgB subfamily.

Its subcellular location is the cytoplasm. The catalysed reaction is N-acetyl-L-glutamate + ATP = N-acetyl-L-glutamyl 5-phosphate + ADP. The protein operates within amino-acid biosynthesis; L-arginine biosynthesis; N(2)-acetyl-L-ornithine from L-glutamate: step 2/4. Catalyzes the ATP-dependent phosphorylation of N-acetyl-L-glutamate. This is Acetylglutamate kinase from Ehrlichia ruminantium (strain Gardel).